The sequence spans 70 residues: Cecropin-P1 (70 aa).

Positions 1-13 (MFLIYLFVQTAES) are cleaved as a signal peptide. A propeptide spans 45-70 (RRRFVAEQDAIHSRVSREVPTLSDSV) (removed in mature form).

Expressed in the body wall, intestine, uterus and ovary.

It is found in the secreted. Its function is as follows. Has antibacterial activity against several Gram-positive and Gram-negative bacteria. Is weakly active against yeasts. Acts by a nonpore mechanism. The polypeptide is Cecropin-P1 (ASCEC-1) (Ascaris suum (Pig roundworm)).